Reading from the N-terminus, the 350-residue chain is Renin receptor (350 aa).

The first 17 residues, 1–17 (MAVLVVLLFFLVAGALG), serve as a signal peptide directing secretion. Residues 18-302 (NEFSILRSPG…YNLAYKYNLE (285 aa)) are Extracellular-facing. A helical transmembrane segment spans residues 303–323 (YSVVFNLVLWIMIGLALAVII). The Cytoplasmic segment spans residues 324–350 (TSYNIWNMDPGYDSIIYRMTNQKIRID). Residues 346–350 (KIRID) carry the Mediates retrograde transport to the ER motif.

In terms of assembly, interacts with renin. Accessory component of the multisubunit proton-transporting vacuolar (V)-ATPase protein pump. Interacts (via N-terminus) with ATP6AP1 (via N-terminus). Interacts with ATP6V0D1; ATP6V0D1 is a V-ATPase complex subunit and the interaction promotes V-ATPase complex assembly. Interacts with TMEM9; TMEM9 is a V-ATPase assembly regulator and the interaction induces the interaction with ATP6V0D1. Interacts with VMA21 (via N-terminus); VMA21 is a V-ATPase accessory component. Post-translationally, phosphorylated. Proteolytically cleaved by a furin-like convertase in the trans-Golgi network to generate N- and C-terminal fragments. As to expression, expressed in glutamatergic and GABAergic neurons with highest levels in the cortex, the hippocampus, the medial habenular nucleus, the cerebellum, the medulla and the olfactory bulb (at protein level).

The protein resides in the endoplasmic reticulum membrane. It localises to the lysosome membrane. Its subcellular location is the cytoplasmic vesicle. It is found in the autophagosome membrane. The protein localises to the cell projection. The protein resides in the dendritic spine membrane. It localises to the axon. Its subcellular location is the endosome membrane. It is found in the clathrin-coated vesicle membrane. The protein localises to the secretory vesicle. The protein resides in the synaptic vesicle membrane. Functionally, multifunctional protein which functions as a renin, prorenin cellular receptor and is involved in the assembly of the lysosomal proton-transporting V-type ATPase (V-ATPase) and the acidification of the endo-lysosomal system. May mediate renin-dependent cellular responses by activating ERK1 and ERK2. By increasing the catalytic efficiency of renin in AGT/angiotensinogen conversion to angiotensin I, may also play a role in the renin-angiotensin system (RAS). Through its function in V-type ATPase (v-ATPase) assembly and acidification of the lysosome it regulates protein degradation and may control different signaling pathways important for proper brain development, synapse morphology and synaptic transmission. This chain is Renin receptor, found in Mus musculus (Mouse).